The primary structure comprises 312 residues: Malate dehydrogenase (312 aa).

Residues 7–13 (GAAGGIG) and Asp34 each bind NAD(+). Residues Arg81 and Arg87 each contribute to the substrate site. Residues Asn94 and 117 to 119 (ITN) each bind NAD(+). Residues Asn119 and Arg153 each coordinate substrate. His177 acts as the Proton acceptor in catalysis. Met227 provides a ligand contact to NAD(+).

It belongs to the LDH/MDH superfamily. MDH type 1 family. As to quaternary structure, homodimer.

The catalysed reaction is (S)-malate + NAD(+) = oxaloacetate + NADH + H(+). Catalyzes the reversible oxidation of malate to oxaloacetate. In Shigella flexneri serotype 5b (strain 8401), this protein is Malate dehydrogenase.